A 291-amino-acid polypeptide reads, in one-letter code: Small ribosomal subunit biogenesis GTPase RsgA (291 aa).

The region spanning Gln-63–Leu-221 is the CP-type G domain. GTP is bound by residues Thr-112 to Asp-115 and Gly-164 to Thr-172. The Zn(2+) site is built by Cys-245, Cys-250, His-252, and Cys-258.

Belongs to the TRAFAC class YlqF/YawG GTPase family. RsgA subfamily. Monomer. Associates with 30S ribosomal subunit, binds 16S rRNA. It depends on Zn(2+) as a cofactor.

The protein localises to the cytoplasm. Its function is as follows. One of several proteins that assist in the late maturation steps of the functional core of the 30S ribosomal subunit. Helps release RbfA from mature subunits. May play a role in the assembly of ribosomal proteins into the subunit. Circularly permuted GTPase that catalyzes slow GTP hydrolysis, GTPase activity is stimulated by the 30S ribosomal subunit. This Staphylococcus carnosus (strain TM300) protein is Small ribosomal subunit biogenesis GTPase RsgA.